Reading from the N-terminus, the 376-residue chain is tRNA-specific 2-thiouridylase MnmA (376 aa).

ATP contacts are provided by residues 19 to 26 and Met-45; that span reads GMSGGVDS. The segment at 105–107 is interaction with target base in tRNA; that stretch reads NPD. Catalysis depends on Cys-110, which acts as the Nucleophile. Cys-110 and Cys-210 are joined by a disulfide. Gly-134 lines the ATP pocket. Residues 160–162 are interaction with tRNA; sequence KDQ. The active-site Cysteine persulfide intermediate is Cys-210. Residues 326–327 form an interaction with tRNA region; the sequence is RY.

This sequence belongs to the MnmA/TRMU family.

The protein resides in the cytoplasm. It catalyses the reaction S-sulfanyl-L-cysteinyl-[protein] + uridine(34) in tRNA + AH2 + ATP = 2-thiouridine(34) in tRNA + L-cysteinyl-[protein] + A + AMP + diphosphate + H(+). Its function is as follows. Catalyzes the 2-thiolation of uridine at the wobble position (U34) of tRNA, leading to the formation of s(2)U34. The sequence is that of tRNA-specific 2-thiouridylase MnmA from Bordetella petrii (strain ATCC BAA-461 / DSM 12804 / CCUG 43448).